Here is a 306-residue protein sequence, read N- to C-terminus: Ribonuclease Z (306 aa).

Residues His63, His65, Asp67, His68, His141, Asp211, and His269 each coordinate Zn(2+). Asp67 serves as the catalytic Proton acceptor.

Belongs to the RNase Z family. As to quaternary structure, homodimer. The cofactor is Zn(2+).

The enzyme catalyses Endonucleolytic cleavage of RNA, removing extra 3' nucleotides from tRNA precursor, generating 3' termini of tRNAs. A 3'-hydroxy group is left at the tRNA terminus and a 5'-phosphoryl group is left at the trailer molecule.. Its function is as follows. Zinc phosphodiesterase, which displays some tRNA 3'-processing endonuclease activity. Probably involved in tRNA maturation, by removing a 3'-trailer from precursor tRNA. This chain is Ribonuclease Z, found in Staphylococcus aureus (strain MSSA476).